Here is a 162-residue protein sequence, read N- to C-terminus: Large ribosomal subunit protein uL10 (162 aa).

It belongs to the universal ribosomal protein uL10 family. In terms of assembly, part of the ribosomal stalk of the 50S ribosomal subunit. The N-terminus interacts with L11 and the large rRNA to form the base of the stalk. The C-terminus forms an elongated spine to which L12 dimers bind in a sequential fashion forming a multimeric L10(L12)X complex.

In terms of biological role, forms part of the ribosomal stalk, playing a central role in the interaction of the ribosome with GTP-bound translation factors. In Borreliella burgdorferi (strain ATCC 35210 / DSM 4680 / CIP 102532 / B31) (Borrelia burgdorferi), this protein is Large ribosomal subunit protein uL10 (rplJ).